The sequence spans 862 residues: Protein translocase subunit SecA (862 aa).

Residues Q86, 104–108, and D499 each bind ATP; that span reads GEGKT. Zn(2+)-binding residues include C848, C850, C859, and H860.

It belongs to the SecA family. In terms of assembly, monomer and homodimer. Part of the essential Sec protein translocation apparatus which comprises SecA, SecYEG and auxiliary proteins SecDF-YajC and YidC. It depends on Zn(2+) as a cofactor.

The protein localises to the cell inner membrane. It is found in the cytoplasm. The catalysed reaction is ATP + H2O + cellular proteinSide 1 = ADP + phosphate + cellular proteinSide 2.. Part of the Sec protein translocase complex. Interacts with the SecYEG preprotein conducting channel. Has a central role in coupling the hydrolysis of ATP to the transfer of proteins into and across the cell membrane, serving both as a receptor for the preprotein-SecB complex and as an ATP-driven molecular motor driving the stepwise translocation of polypeptide chains across the membrane. In Ehrlichia chaffeensis (strain ATCC CRL-10679 / Arkansas), this protein is Protein translocase subunit SecA.